The primary structure comprises 592 residues: MKLLSVLSLSLVLSCTTLSAQKVYEISAFGLKANSSKNASPVLQKALAKIKAEYKEGEKVILRFPEGRYEFHEKGAAVREYYISNHDQTNPKKVGIALEDMKNLTLDGQGSEFVFHGRMLPVSLLRSENCLLKNFSIDFENPHIAQVKIVENDPQDGIVFEPAPWVDYRIAKDSIFEAYGEGWTMRHSWGIAFDGDTKHLVYNTSDIGCPTKGASEVAPRRIHAPGWKDARLVPGTVVAMRGWGRPTPGIFLSHDVNTTIENVKVHYAEGMGLLAQLCENITLEKFGVCLKGDADPRYFTTQADATHFSGCKGKIVSCNGLYEGMMDDAINVHGTYLKVVKRVDDRTLVGRYMHGQSWGFEWGCPGDEVQFIRSNTMELVGKQNKIISIRPYDKEQTEGAREFLITFQEPVDQVINEQSGFGIENLTWTPEVLFSGNVIRNNRARGSLFSTPRKTIVENNLFDHTSGAAILLCGDCNGWFETGACRHVIIRKNRFVNALTNLFQFTNAVISIYPEIPDLKGQQQYFHGGPEGGIVIEDNEFETFDAPILYAKSVDGLVFRNNTIKLNTEYKPFHPNRNRFWLERVTNVTIAE.

Residues 1–14 form the signal peptide; that stretch reads MKLLSVLSLSLVLS. Residue Cys15 is the site of N-palmitoyl cysteine attachment. A lipid anchor (S-diacylglycerol cysteine) is attached at Cys15. PbH1 repeat units follow at residues 429 to 451, 452 to 474, and 485 to 538; these read TPEVLFSGNVIRNNRARGSLFST, PRKTIVENNLFDHTSGAAILLCG, and CRHV…VIED.

Belongs to the glycosyl hydrolase 110 family. B subfamily.

The protein localises to the cell membrane. It carries out the reaction Hydrolysis of terminal, non-reducing branched (1-&gt;3)-alpha-D-galactosidic residues, producing free D-galactose.. It catalyses the reaction Hydrolysis of terminal, non-reducing linear (1-&gt;3)-alpha-D-galactosidic residues, producing free D-galactose.. The catalysed reaction is Hydrolysis of terminal, non-reducing alpha-D-galactose residues in alpha-D-galactosides, including galactose oligosaccharides, galactomannans and galactolipids.. Alpha-galactosidase. Removes both branched alpha-1,3-linked galactose residues of blood group B antigens and linear alpha-1,3-linked galactose structures. The sequence is that of Alpha-1,3-galactosidase B (glaB1) from Phocaeicola vulgatus (strain ATCC 8482 / DSM 1447 / JCM 5826 / CCUG 4940 / NBRC 14291 / NCTC 11154) (Bacteroides vulgatus).